The following is a 337-amino-acid chain: tRNA(Ile)-lysidine synthase (337 aa).

Residue 40–45 (SGGQDS) coordinates ATP.

The protein belongs to the tRNA(Ile)-lysidine synthase family.

Its subcellular location is the cytoplasm. It carries out the reaction cytidine(34) in tRNA(Ile2) + L-lysine + ATP = lysidine(34) in tRNA(Ile2) + AMP + diphosphate + H(+). Its function is as follows. Ligates lysine onto the cytidine present at position 34 of the AUA codon-specific tRNA(Ile) that contains the anticodon CAU, in an ATP-dependent manner. Cytidine is converted to lysidine, thus changing the amino acid specificity of the tRNA from methionine to isoleucine. In Parasynechococcus marenigrum (strain WH8102), this protein is tRNA(Ile)-lysidine synthase.